We begin with the raw amino-acid sequence, 384 residues long: UDP-N-acetylglucosamine--N-acetylmuramyl-(pentapeptide) pyrophosphoryl-undecaprenol N-acetylglucosamine transferase (384 aa).

UDP-N-acetyl-alpha-D-glucosamine contacts are provided by residues 22–24 (TGG), R179, S209, and Q312.

The protein belongs to the glycosyltransferase 28 family. MurG subfamily.

The protein localises to the cell inner membrane. It catalyses the reaction di-trans,octa-cis-undecaprenyl diphospho-N-acetyl-alpha-D-muramoyl-L-alanyl-D-glutamyl-meso-2,6-diaminopimeloyl-D-alanyl-D-alanine + UDP-N-acetyl-alpha-D-glucosamine = di-trans,octa-cis-undecaprenyl diphospho-[N-acetyl-alpha-D-glucosaminyl-(1-&gt;4)]-N-acetyl-alpha-D-muramoyl-L-alanyl-D-glutamyl-meso-2,6-diaminopimeloyl-D-alanyl-D-alanine + UDP + H(+). The protein operates within cell wall biogenesis; peptidoglycan biosynthesis. In terms of biological role, cell wall formation. Catalyzes the transfer of a GlcNAc subunit on undecaprenyl-pyrophosphoryl-MurNAc-pentapeptide (lipid intermediate I) to form undecaprenyl-pyrophosphoryl-MurNAc-(pentapeptide)GlcNAc (lipid intermediate II). The protein is UDP-N-acetylglucosamine--N-acetylmuramyl-(pentapeptide) pyrophosphoryl-undecaprenol N-acetylglucosamine transferase of Treponema pallidum (strain Nichols).